The primary structure comprises 306 residues: Metal ABC transporter substrate-binding lipoprotein SloC (306 aa).

Positions M1–A19 are cleaved as a signal peptide. C20 is lipidated: N-palmitoyl cysteine. Residue C20 is the site of S-diacylglycerol cysteine attachment. H64, H136, E202, and D277 together coordinate a divalent metal cation.

It belongs to the bacterial solute-binding protein 9 family. Lipoprotein receptor antigen (Lrai) subfamily.

The protein localises to the cell membrane. In terms of biological role, part of the ATP-binding cassette (ABC) transport system SloABC involved in metal import. Binds a metal with high affinity and specificity and delivers it to the membrane permease for translocation into the cytoplasm. May act as an adhesin which is involved on adherence to extracellular matrix. It is an important factor in pathogenesis and infection. May contribute to the formation and accumulation of dental plaque. The polypeptide is Metal ABC transporter substrate-binding lipoprotein SloC (sloC) (Streptococcus mutans serotype c (strain ATCC 700610 / UA159)).